Reading from the N-terminus, the 190-residue chain is Putative phosphatidylethanolamine-binding protein (190 aa).

It belongs to the phosphatidylethanolamine-binding protein family.

This Plasmodium falciparum protein is Putative phosphatidylethanolamine-binding protein.